Reading from the N-terminus, the 284-residue chain is Pantothenate synthetase (284 aa).

Residue 30 to 37 (MGNLHEGH) participates in ATP binding. Histidine 37 acts as the Proton donor in catalysis. (R)-pantoate is bound at residue glutamine 61. Position 61 (glutamine 61) interacts with beta-alanine. 149–152 (GEKD) contacts ATP. Glutamine 155 contributes to the (R)-pantoate binding site. Residues valine 178 and 186–189 (LSSR) contribute to the ATP site.

The protein belongs to the pantothenate synthetase family. In terms of assembly, homodimer.

The protein localises to the cytoplasm. The enzyme catalyses (R)-pantoate + beta-alanine + ATP = (R)-pantothenate + AMP + diphosphate + H(+). Its pathway is cofactor biosynthesis; (R)-pantothenate biosynthesis; (R)-pantothenate from (R)-pantoate and beta-alanine: step 1/1. Its function is as follows. Catalyzes the condensation of pantoate with beta-alanine in an ATP-dependent reaction via a pantoyl-adenylate intermediate. The sequence is that of Pantothenate synthetase from Yersinia enterocolitica serotype O:8 / biotype 1B (strain NCTC 13174 / 8081).